Consider the following 761-residue polypeptide: Prolyl endopeptidase FAP (761 aa).

Residues 1–4 are Cytoplasmic-facing; that stretch reads MKTW. Residues 5–25 form a helical; Signal-anchor for type II membrane protein membrane-spanning segment; it reads LKTVFGVTTLAALALVVICIV. Residues 26-761 are Extracellular-facing; that stretch reads LRPSRVYKPE…FLKQCFSLSD (736 aa). N-linked (GlcNAc...) asparagine glycosylation is found at Asn49, Asn92, and Asn99. Glu203 and Glu204 together coordinate substrate. 2 N-linked (GlcNAc...) asparagine glycosylation sites follow: Asn227 and Asn314. 3 disulfides stabilise this stretch: Cys321–Cys332, Cys438–Cys441, and Cys448–Cys466. The Charge relay system role is filled by Ser624. Cys643 and Cys756 form a disulfide bridge. Residue Asn679 is glycosylated (N-linked (GlcNAc...) asparagine). Catalysis depends on charge relay system residues Asp702 and His734.

It belongs to the peptidase S9B family. Homodimer; homodimerization is required for activity of both plasma membrane and soluble forms. The monomer is inactive. Heterodimer with DPP4. Interacts with PLAUR; the interaction occurs at the cell surface of invadopodia membranes. Interacts with ITGB1. Interacts with ITGA3. Associates with integrin alpha-3/beta-1; the association occurs in a collagen-dependent manner at the cell surface of invadopodia membranes. N-glycosylated. Post-translationally, the N-terminus may be blocked. Expressed strongly in uterus, pancreas, submaxillary gland and skin, less in lymph node, ovary, skeletal muscle, adrenal and bone marrow. Expressed in reactive stromal fibroblast in epithelial cancers. Expressed in melanocytes but not melanomas (at protein level). Detected in fibroblasts, in placenta, uterus, embryos from day 7-19 and in newborn mice (P1).

Its subcellular location is the cell surface. It is found in the cell membrane. The protein localises to the cell projection. The protein resides in the lamellipodium membrane. It localises to the invadopodium membrane. Its subcellular location is the ruffle membrane. It is found in the membrane. The protein localises to the secreted. The enzyme catalyses Hydrolysis of Pro-|-Xaa &gt;&gt; Ala-|-Xaa in oligopeptides.. The catalysed reaction is Release of an N-terminal dipeptide, Xaa-Yaa-|-Zaa-, from a polypeptide, preferentially when Yaa is Pro, provided Zaa is neither Pro nor hydroxyproline.. Its activity is regulated as follows. Gelatinase activity is inhibited by serine-protease inhibitors, such as phenylmethylsulfonyl fluoride (PMSF), 4-(2-aminoethyl)-benzenesulfonyl fluoride hydrochloride (AEBSF), 4-amidino phenylsulfonyl fluoride (APSF) and diisopropyl fluorophosphate (DFP), N-ethylmaleimide (NEM) and phenylmethylsulfonyl fluoride (PMSF). Dipeptidyl peptidase activity is inhibited by 2,2'-azino-bis(3-ethylbenzthiazoline-6-sulfonic acid), diisopropylfluorophosphate (DFP). Prolyl endopeptidase activity is inhibited by the boronic acid peptide Ac-Gly-BoroPro, Ac-Gly-Pro-chloromethyl ketone and Thr-Ser-Gly-chloromethyl ketone. In terms of biological role, cell surface glycoprotein serine protease that participates in extracellular matrix degradation and involved in many cellular processes including tissue remodeling, fibrosis, wound healing, inflammation and tumor growth. Both plasma membrane and soluble forms exhibit post-proline cleaving endopeptidase activity, with a marked preference for Ala/Ser-Gly-Pro-Ser/Asn/Ala consensus sequences, on substrate such as alpha-2-antiplasmin SERPINF2 and SPRY2. Degrade also gelatin, heat-denatured type I collagen, but not native collagen type I and IV, vibronectin, tenascin, laminin, fibronectin, fibrin or casein. Also has dipeptidyl peptidase activity, exhibiting the ability to hydrolyze the prolyl bond two residues from the N-terminus of synthetic dipeptide substrates provided that the penultimate residue is proline, with a preference for Ala-Pro, Ile-Pro, Gly-Pro, Arg-Pro and Pro-Pro. Natural neuropeptide hormones for dipeptidyl peptidase are the neuropeptide Y (NPY), peptide YY (PYY), substance P (TAC1) and brain natriuretic peptide 32 (NPPB). The plasma membrane form, in association with either DPP4, PLAUR or integrins, is involved in the pericellular proteolysis of the extracellular matrix (ECM), and hence promotes cell adhesion, migration and invasion through the ECM. Plays a role in tissue remodeling during development and wound healing. Participates in the cell invasiveness towards the ECM in malignant melanoma cancers. Enhances tumor growth progression by increasing angiogenesis, collagen fiber degradation and apoptosis and by reducing antitumor response of the immune system. Promotes glioma cell invasion through the brain parenchyma by degrading the proteoglycan brevican. Acts as a tumor suppressor in melanocytic cells through regulation of cell proliferation and survival in a serine protease activity-independent manner. The chain is Prolyl endopeptidase FAP from Mus musculus (Mouse).